Reading from the N-terminus, the 222-residue chain is Deoxyribose-phosphate aldolase (222 aa).

The Proton donor/acceptor role is filled by Asp-94. Lys-156 acts as the Schiff-base intermediate with acetaldehyde in catalysis. The Proton donor/acceptor role is filled by Lys-185.

The protein belongs to the DeoC/FbaB aldolase family. DeoC type 1 subfamily.

The protein resides in the cytoplasm. It catalyses the reaction 2-deoxy-D-ribose 5-phosphate = D-glyceraldehyde 3-phosphate + acetaldehyde. It functions in the pathway carbohydrate degradation; 2-deoxy-D-ribose 1-phosphate degradation; D-glyceraldehyde 3-phosphate and acetaldehyde from 2-deoxy-alpha-D-ribose 1-phosphate: step 2/2. Catalyzes a reversible aldol reaction between acetaldehyde and D-glyceraldehyde 3-phosphate to generate 2-deoxy-D-ribose 5-phosphate. The sequence is that of Deoxyribose-phosphate aldolase from Malacoplasma penetrans (strain HF-2) (Mycoplasma penetrans).